A 51-amino-acid chain; its full sequence is uncharacterized protein (51 aa).

Residues 3–30 are a coiled coil; that stretch reads EEKAVSLAKEIIELDIKRDEMLETFMQL.

This is an uncharacterized protein from Bacillus subtilis (strain 168).